A 175-amino-acid polypeptide reads, in one-letter code: RNA pyrophosphohydrolase (175 aa).

Residues 6–149 (GYRPNVGIVI…KRDVYRRVMK (144 aa)) enclose the Nudix hydrolase domain. The Nudix box motif lies at 38-59 (GGINPGETAEQAMYRELFEEVG).

The protein belongs to the Nudix hydrolase family. RppH subfamily. A divalent metal cation is required as a cofactor.

Functionally, accelerates the degradation of transcripts by removing pyrophosphate from the 5'-end of triphosphorylated RNA, leading to a more labile monophosphorylated state that can stimulate subsequent ribonuclease cleavage. This chain is RNA pyrophosphohydrolase, found in Serratia proteamaculans (strain 568).